Here is a 325-residue protein sequence, read N- to C-terminus: MIALSYKAFLNPYIIEVEKRLYECIQSDSETINKAAHHILSSGGKRVRPMFVLLSGFLNDTQKDDLIRTAVSLELVHMASLVHDDYIDNSDMRRGNTSVHIAFDKDTAIRTGHFLLARALQNIATINNSKFHQIFSKTILEVCFGEFDQMADRFNYPVSFTAYLRRINRKTAILIEASCHLGALSSQLDEQSTYHIKQFGHCIGMSYQIIDDILDYTSDEATLGKPVGSDIRNGHITYPLMAAIANLKEQDDDKLEAVVKHLTSTSDDEVYQYIVSQVKQYGIEPAELLSRKYGDKAKYHLSQLQDSNIKDYLEEIHEKMLKRVY.

Residues K45, R48, and H77 each contribute to the isopentenyl diphosphate site. 3 residues coordinate all-trans-hexaprenyl diphosphate: D84, D88, and R93. Residues D84 and D88 each contribute to the Mg(2+) site. An isopentenyl diphosphate-binding site is contributed by R94. All-trans-hexaprenyl diphosphate-binding residues include K170, T171, and Q208.

The protein belongs to the FPP/GGPP synthase family. As to quaternary structure, dimer of heterodimer or heterotetramer composed of a small (Hexs-a) and large (Hexs-B) subunit. The cofactor is Mg(2+).

It carries out the reaction 3 isopentenyl diphosphate + (2E,6E)-farnesyl diphosphate = all-trans-hexaprenyl diphosphate + 3 diphosphate. Its function is as follows. Catalyzes the condensation of three molecules of isopentenyl diphosphate with farnesyl diphosphate (FPP) to yield (all-E)-hexaprenyl diphosphate (HexPP; C30), the precursor of the prenyl side chain of menaquinone-6. Large subunit Hexs-B catalyzes the condensation reaction and the final product chain length is cooperatively regulated by both the Hexs-A and Hexs-B subunits using the whole size of the hydrophobic cleft as a ruler. The protein is Hexaprenyl-diphosphate synthase large subunit ((2E,6E)-farnesyl-diphosphate specific) (hexs-b) of Micrococcus luteus (Micrococcus lysodeikticus).